A 198-amino-acid chain; its full sequence is Glycerol-3-phosphate acyltransferase (198 aa).

The next 6 helical transmembrane spans lie at Met1–Ala21, Ile53–Leu73, Trp79–Trp99, Ile111–Ile131, Ile136–Phe156, and Gly158–Trp178.

It belongs to the PlsY family. In terms of assembly, probably interacts with PlsX.

Its subcellular location is the cell inner membrane. The catalysed reaction is an acyl phosphate + sn-glycerol 3-phosphate = a 1-acyl-sn-glycero-3-phosphate + phosphate. The protein operates within lipid metabolism; phospholipid metabolism. Functionally, catalyzes the transfer of an acyl group from acyl-phosphate (acyl-PO(4)) to glycerol-3-phosphate (G3P) to form lysophosphatidic acid (LPA). This enzyme utilizes acyl-phosphate as fatty acyl donor, but not acyl-CoA or acyl-ACP. In Prochlorococcus marinus (strain NATL1A), this protein is Glycerol-3-phosphate acyltransferase.